Consider the following 835-residue polypeptide: Leucine--tRNA ligase (835 aa).

The 'HIGH' region motif lies at Pro-44–His-54. The short motif at Lys-587–Ser-591 is the 'KMSKS' region element. Lys-590 provides a ligand contact to ATP.

Belongs to the class-I aminoacyl-tRNA synthetase family.

It localises to the cytoplasm. It catalyses the reaction tRNA(Leu) + L-leucine + ATP = L-leucyl-tRNA(Leu) + AMP + diphosphate. The sequence is that of Leucine--tRNA ligase from Lawsonia intracellularis (strain PHE/MN1-00).